Consider the following 255-residue polypeptide: EEF1A lysine methyltransferase 4 (255 aa).

S-adenosyl-L-methionine-binding residues include W26 and Y30. Y39 bears the Phosphotyrosine mark. S-adenosyl-L-methionine contacts are provided by residues W41, G66, 88–89 (DY), 113–114 (DV), and K130. The Required for methyltransferase activity motif lies at 129–134 (EKGTLD).

The protein belongs to the methyltransferase superfamily.

It catalyses the reaction L-lysyl-[protein] + S-adenosyl-L-methionine = N(6)-methyl-L-lysyl-[protein] + S-adenosyl-L-homocysteine + H(+). It carries out the reaction N(6)-methyl-L-lysyl-[protein] + S-adenosyl-L-methionine = N(6),N(6)-dimethyl-L-lysyl-[protein] + S-adenosyl-L-homocysteine + H(+). The catalysed reaction is N(6),N(6)-dimethyl-L-lysyl-[protein] + S-adenosyl-L-methionine = N(6),N(6),N(6)-trimethyl-L-lysyl-[protein] + S-adenosyl-L-homocysteine + H(+). In terms of biological role, protein-lysine methyltransferase that efficiently catalyzes three successive methylations on 'Lys-36' in eukaryotic translation elongation factor 1 alpha (EEF1A1 or EEF1A2). This is EEF1A lysine methyltransferase 4 from Homo sapiens (Human).